The primary structure comprises 434 residues: Trigger factor (434 aa).

The 86-residue stretch at 160–245 (GDKVKMNFVG…LTEVQAAQLP (86 aa)) folds into the PPIase FKBP-type domain.

The protein belongs to the FKBP-type PPIase family. Tig subfamily.

The protein localises to the cytoplasm. It catalyses the reaction [protein]-peptidylproline (omega=180) = [protein]-peptidylproline (omega=0). In terms of biological role, involved in protein export. Acts as a chaperone by maintaining the newly synthesized protein in an open conformation. Functions as a peptidyl-prolyl cis-trans isomerase. This chain is Trigger factor, found in Shewanella denitrificans (strain OS217 / ATCC BAA-1090 / DSM 15013).